The primary structure comprises 3750 residues: Cubilin homolog (3750 aa).

A signal peptide spans 1–28 (MEGAARSRLLLCWTLLAIITDTWPIAEG). Asn-51 and Asn-123 each carry an N-linked (GlcNAc...) asparagine glycan. Residues 154–190 (EANSCASGPCENGGTCYNTYTGFRCQCRSAFEGTKCE) form the EGF-like 1 domain. 6 disulfide bridges follow: Cys-158–Cys-169, Cys-163–Cys-178, Cys-180–Cys-189, Cys-196–Cys-212, Cys-206–Cys-221, and Cys-223–Cys-232. Residues 192–233 (DVNECALYEGTDLGCQNGGQCQNHFGTYSCLCQPGWHGMHCT) form the EGF-like 2; calcium-binding domain. Residues 282–308 (DVDECSDSAAHKPCSTSCINLPGSFTC) enclose the EGF-like 3; calcium-binding domain. The EGF-like 4; calcium-binding domain maps to 324-352 (DLDECQTNNGGCSLSPKVDCINTYGSYHC). Asn-424 carries an N-linked (GlcNAc...) asparagine glycan. 2 EGF-like domains span residues 426–463 (TTTN…PICE) and 465–503 (QPSP…RLCE). 7 disulfides stabilise this stretch: Cys-430–Cys-441, Cys-435–Cys-451, Cys-453–Cys-462, Cys-469–Cys-480, Cys-474–Cys-491, Cys-493–Cys-502, and Cys-509–Cys-535. The N-linked (GlcNAc...) asparagine glycan is linked to Asn-448. CUB domains follow at residues 509-623 (CNGM…WNSM), 627-738 (CGGR…YSVE), 744-852 (CGGV…YRMA), 853-971 (CDYK…YRAL), 978-1095 (CGGV…YTFE), 1100-1212 (CGGH…WRIF), 1216-1331 (CGGS…YKAN), 1332-1434 (CIRN…QLDY), 1439-1550 (CMEE…YRTV), 1554-1670 (CGGK…FHES), 1671-1788 (CGQT…YMTM), 1792-1902 (CGSI…YNYE), and 1903-2001 (HHNE…WNRL). Residues Asn-542 and Asn-548 are each glycosylated (N-linked (GlcNAc...) asparagine). Cys-562 and Cys-584 form a disulfide bridge. A glycan (N-linked (GlcNAc...) asparagine) is linked at Asn-609. Intrachain disulfides connect Cys-627-Cys-654, Cys-681-Cys-701, Cys-744-Cys-770, Cys-853-Cys-879, Cys-913-Cys-933, and Cys-978-Cys-1004. Residue Asn-871 is glycosylated (N-linked (GlcNAc...) asparagine). 3 residues coordinate Ca(2+): Glu-1026, Asp-1034, and Asp-1080. Cys-1031 and Cys-1058 are disulfide-bonded. Cys-1100 and Cys-1126 are joined by a disulfide. Asn-1119 is a glycosylation site (N-linked (GlcNAc...) asparagine). Ca(2+) is bound at residue Glu-1148. A glycan (N-linked (GlcNAc...) asparagine) is linked at Asn-1152. Residues Cys-1153 and Cys-1175 are joined by a disulfide bond. Ca(2+) is bound by residues Asp-1156 and Asp-1197. Cys-1216 and Cys-1242 are oxidised to a cystine. Ca(2+)-binding residues include Glu-1264, Asp-1272, and Asp-1316. Cys-1269 and Cys-1292 are disulfide-bonded. An intrachain disulfide couples Cys-1332 to Cys-1360. N-linked (GlcNAc...) asparagine glycosylation is found at Asn-1335, Asn-1359, Asn-1413, and Asn-1424. A disulfide bridge links Cys-1439 with Cys-1465. The N-linked (GlcNAc...) asparagine glycan is linked to Asn-1491. 7 cysteine pairs are disulfide-bonded: Cys-1492–Cys-1513, Cys-1554–Cys-1580, Cys-1607–Cys-1631, Cys-1671–Cys-1697, Cys-1733–Cys-1755, Cys-1792–Cys-1818, and Cys-1845–Cys-1866. Asn-1694 carries an N-linked (GlcNAc...) asparagine glycan. N-linked (GlcNAc...) asparagine glycosylation is found at Asn-1908 and Asn-2009. Disulfide bonds link Cys-2019/Cys-2048 and Cys-2077/Cys-2100. CUB domains lie at 2019-2139 (CGNQ…VRTA), 2140-2256 (CGSE…FRFE), 2262-2383 (DSGR…LSVA), 2385-2512 (CGGS…YTSL), and 2516-2646 (CGET…MNEV). N-linked (GlcNAc...) asparagine glycosylation is found at Asn-2092, Asn-2128, Asn-2152, and Asn-2231. Cys-2140 and Cys-2167 are disulfide-bonded. Cys-2324 and Cys-2346 are oxidised to a cystine. N-linked (GlcNAc...) asparagine glycosylation is present at Asn-2377. Cys-2385 and Cys-2416 form a disulfide bridge. Asn-2442 carries N-linked (GlcNAc...) asparagine glycosylation. Intrachain disulfides connect Cys-2445/Cys-2474 and Cys-2516/Cys-2542. N-linked (GlcNAc...) asparagine glycans are attached at residues Asn-2655, Asn-2671, Asn-2682, and Asn-2772. 2 disulfide bridges follow: Cys-2761–Cys-2790 and Cys-2837–Cys-2859. CUB domains are found at residues 2761 to 2895 (CGGV…IKYG), 2898 to 3010 (CGGK…FERN), 3011 to 3128 (CGGL…YTSR), 3130 to 3246 (CGGI…VRVM), 3249 to 3364 (CDEK…INAI), 3368 to 3512 (CGSS…VALN), 3522 to 3615 (LQGR…YLAS), and 3623 to 3736 (CGGQ…FAGV). 2 N-linked (GlcNAc...) asparagine glycosylation sites follow: Asn-2885 and Asn-2889. Intrachain disulfides connect Cys-2898–Cys-2921 and Cys-2949–Cys-2973. N-linked (GlcNAc...) asparagine glycans are attached at residues Asn-2960, Asn-2965, and Asn-2982. A disulfide bridge connects residues Cys-3011 and Cys-3039. 2 N-linked (GlcNAc...) asparagine glycosylation sites follow: Asn-3040 and Asn-3074. Intrachain disulfides connect Cys-3070–Cys-3092 and Cys-3130–Cys-3157. Asn-3160 carries an N-linked (GlcNAc...) asparagine glycan. Intrachain disulfides connect Cys-3184–Cys-3207, Cys-3249–Cys-3278, Cys-3305–Cys-3327, and Cys-3368–Cys-3402. An N-linked (GlcNAc...) asparagine glycan is attached at Asn-3256. N-linked (GlcNAc...) asparagine glycosylation is present at Asn-3427. Cysteines 3430 and 3475 form a disulfide. N-linked (GlcNAc...) asparagine glycosylation is found at Asn-3543, Asn-3572, and Asn-3645. Disulfide bonds link Cys-3560-Cys-3579, Cys-3623-Cys-3649, and Cys-3676-Cys-3699.

Specifically expressed in nephrocytes.

The protein resides in the cell membrane. In terms of biological role, required in the nephrocyte for normal uptake of proteins and elimination of toxins, and for maintenance of endocytic trafficking structures. May function together with Amnionless. This chain is Cubilin homolog, found in Drosophila melanogaster (Fruit fly).